Consider the following 347-residue polypeptide: 3-isopropylmalate dehydrogenase (347 aa).

Substrate is bound by residues R95, R105, R129, and D220. Residues D220, D244, and D248 each contribute to the Mg(2+) site. G280–D292 contacts NAD(+).

The protein belongs to the isocitrate and isopropylmalate dehydrogenases family. LeuB type 2 subfamily. Homodimer. Requires Mg(2+) as cofactor. Mn(2+) is required as a cofactor.

It is found in the cytoplasm. It catalyses the reaction (2R,3S)-3-isopropylmalate + NAD(+) = 4-methyl-2-oxopentanoate + CO2 + NADH. It participates in amino-acid biosynthesis; L-leucine biosynthesis; L-leucine from 3-methyl-2-oxobutanoate: step 3/4. Functionally, catalyzes the oxidation of 3-carboxy-2-hydroxy-4-methylpentanoate (3-isopropylmalate) to 3-carboxy-4-methyl-2-oxopentanoate. The product decarboxylates to 4-methyl-2 oxopentanoate. The chain is 3-isopropylmalate dehydrogenase from Beutenbergia cavernae (strain ATCC BAA-8 / DSM 12333 / CCUG 43141 / JCM 11478 / NBRC 16432 / NCIMB 13614 / HKI 0122).